Here is a 325-residue protein sequence, read N- to C-terminus: Thiamine-monophosphate kinase (325 aa).

Asp30, Ser45, Thr46, and Asp47 together coordinate Mg(2+). Substrate is bound at residue His54. The Mg(2+) site is built by Asp75 and Asp122. Residues 121–122 (GD) and Arg146 each bind ATP. Asp212 contributes to the Mg(2+) binding site. Ser214 contributes to the ATP binding site. Asp215 contacts Mg(2+). The substrate site is built by Glu263 and Tyr319.

This sequence belongs to the thiamine-monophosphate kinase family.

It catalyses the reaction thiamine phosphate + ATP = thiamine diphosphate + ADP. Its pathway is cofactor biosynthesis; thiamine diphosphate biosynthesis; thiamine diphosphate from thiamine phosphate: step 1/1. In terms of biological role, catalyzes the ATP-dependent phosphorylation of thiamine-monophosphate (TMP) to form thiamine-pyrophosphate (TPP), the active form of vitamin B1. The protein is Thiamine-monophosphate kinase (thiL) of Salmonella typhimurium (strain LT2 / SGSC1412 / ATCC 700720).